A 309-amino-acid polypeptide reads, in one-letter code: Ferrochelatase (309 aa).

The Fe cation site is built by His-185 and Glu-262.

This sequence belongs to the ferrochelatase family.

Its subcellular location is the cytoplasm. It carries out the reaction heme b + 2 H(+) = protoporphyrin IX + Fe(2+). It participates in porphyrin-containing compound metabolism; protoheme biosynthesis; protoheme from protoporphyrin-IX: step 1/1. Its function is as follows. Catalyzes the ferrous insertion into protoporphyrin IX. This is Ferrochelatase from Campylobacter jejuni subsp. jejuni serotype O:6 (strain 81116 / NCTC 11828).